The following is a 73-amino-acid chain: Sodium channel neurotoxin MeuNaTxalpha-13 (73 aa).

The first 5 residues, 1–5 (TGVES), serve as a signal peptide directing secretion. In terms of domain architecture, LCN-type CS-alpha/beta spans 7-71 (RDAYIAKPHN…VPIRIPGKCH (65 aa)). 4 disulfide bridges follow: cysteine 17–cysteine 70, cysteine 21–cysteine 43, cysteine 29–cysteine 53, and cysteine 33–cysteine 55. A propeptide spans 72 to 73 (RR) (removed by a carboxypeptidase).

The protein belongs to the long (4 C-C) scorpion toxin superfamily. Sodium channel inhibitor family. Alpha subfamily. As to expression, expressed by the venom gland.

It is found in the secreted. Alpha toxins bind voltage-independently at site-3 of sodium channels (Nav) and inhibit the inactivation of the activated channels, thereby blocking neuronal transmission. This Mesobuthus eupeus (Lesser Asian scorpion) protein is Sodium channel neurotoxin MeuNaTxalpha-13.